We begin with the raw amino-acid sequence, 279 residues long: GDT1-like protein 3 (279 aa).

An N-terminal signal peptide occupies residues 1 to 23 (MDPNPRLLILLVLLAFSATVAVA). 6 consecutive transmembrane segments (helical) span residues 64–84 (VGPG…VSEI), 103–123 (IVLS…TGLG), 135–155 (TNSA…YIAW), 186–206 (FFGR…FLAE), 224–244 (AIGV…LAVI), and 258–278 (VATI…FYPP).

This sequence belongs to the GDT1 family.

The protein resides in the membrane. The polypeptide is GDT1-like protein 3 (Oryza sativa subsp. japonica (Rice)).